Here is a 321-residue protein sequence, read N- to C-terminus: Cytochrome f (321 aa).

The N-terminal stretch at 1–35 (MQNRNKNNWMKKWVIRSISILIILNIIAWPSISYA) is a signal peptide. Y36, C56, C59, and H60 together coordinate heme. Residues 287–306 (IQGLLLFFVSVIMAQILLVL) form a helical membrane-spanning segment.

This sequence belongs to the cytochrome f family. As to quaternary structure, the 4 large subunits of the cytochrome b6-f complex are cytochrome b6, subunit IV (17 kDa polypeptide, petD), cytochrome f and the Rieske protein, while the 4 small subunits are PetG, PetL, PetM and PetN. The complex functions as a dimer. It depends on heme as a cofactor.

Its subcellular location is the plastid. It localises to the chloroplast thylakoid membrane. In terms of biological role, component of the cytochrome b6-f complex, which mediates electron transfer between photosystem II (PSII) and photosystem I (PSI), cyclic electron flow around PSI, and state transitions. This chain is Cytochrome f, found in Psilotum nudum (Whisk fern).